Reading from the N-terminus, the 121-residue chain is Large ribosomal subunit protein uL18 (121 aa).

It belongs to the universal ribosomal protein uL18 family. Part of the 50S ribosomal subunit; part of the 5S rRNA/L5/L18/L25 subcomplex. Contacts the 5S and 23S rRNAs.

Its function is as follows. This is one of the proteins that bind and probably mediate the attachment of the 5S RNA into the large ribosomal subunit, where it forms part of the central protuberance. This Bordetella avium (strain 197N) protein is Large ribosomal subunit protein uL18.